The sequence spans 212 residues: Golgi SNAP receptor complex member 2 (212 aa).

An N-acetylmethionine modification is found at M1. Residues 1–190 (MEPLYQQTNK…LIEKRAFQDK (190 aa)) are Cytoplasmic-facing. A coiled-coil region spans residues 60-92 (LNRRQNAKLRVDQLKYDVQHLQTALRNFQHRRQ). The IxM motif; signal for cargo packaging into COPII-coated vesicles signature appears at 118–120 (IPM). A helical; Anchor for type IV membrane protein transmembrane segment spans residues 191 to 211 (YFMIGGMLLTCAVMFLVVQYL). T212 is a topological domain (vesicular).

It belongs to the GOSR2 family. As to quaternary structure, part of a unique SNARE complex composed of the Golgi SNAREs GOSR1, STX5 and YKT6. Interacts with BET1.

Its subcellular location is the golgi apparatus. It is found in the cis-Golgi network membrane. It localises to the golgi apparatus membrane. The protein resides in the endoplasmic reticulum membrane. Functionally, involved in transport of proteins from the cis/medial-Golgi to the trans-Golgi network. This Mus musculus (Mouse) protein is Golgi SNAP receptor complex member 2 (Gosr2).